The following is a 448-amino-acid chain: Probable glycine dehydrogenase (decarboxylating) subunit 1 (448 aa).

This sequence belongs to the GcvP family. N-terminal subunit subfamily. As to quaternary structure, the glycine cleavage system is composed of four proteins: P, T, L and H. In this organism, the P 'protein' is a heterodimer of two subunits.

The enzyme catalyses N(6)-[(R)-lipoyl]-L-lysyl-[glycine-cleavage complex H protein] + glycine + H(+) = N(6)-[(R)-S(8)-aminomethyldihydrolipoyl]-L-lysyl-[glycine-cleavage complex H protein] + CO2. Functionally, the glycine cleavage system catalyzes the degradation of glycine. The P protein binds the alpha-amino group of glycine through its pyridoxal phosphate cofactor; CO(2) is released and the remaining methylamine moiety is then transferred to the lipoamide cofactor of the H protein. This Staphylococcus aureus (strain USA300) protein is Probable glycine dehydrogenase (decarboxylating) subunit 1.